The chain runs to 313 residues: Maintenance of mitochondrial morphology protein 1 (313 aa).

The Lumenal portion of the chain corresponds to 1 to 12; sequence MIHLPQGSFTQG. Residues 13-33 traverse the membrane as a helical segment; sequence LIVGQLLTLAIIYVFLRFFLF. Over 34–313 the chain is Cytoplasmic; it reads CSPIPKSVAN…APQEESSNED (280 aa). Positions 42–63 are enriched in polar residues; the sequence is ANSPKQTGNETPDETPSTPLSN. The tract at residues 42–65 is disordered; that stretch reads ANSPKQTGNETPDETPSTPLSNNK. Residues 90–288 enclose the SMP-LTD domain; sequence EPESLDWFNV…SPQFQQIAIP (199 aa).

The protein belongs to the MMM1 family. In terms of assembly, homodimer. Component of the ER-mitochondria encounter structure (ERMES) or MDM complex, composed of mmm1, mdm10, mdm12 and mdm34. A mmm1 homodimer associates with one molecule of mdm12 on each side in a pairwise head-to-tail manner, and the SMP-LTD domains of mmm1 and mdm12 generate a continuous hydrophobic tunnel for phospholipid trafficking.

The protein resides in the endoplasmic reticulum membrane. Its function is as follows. Component of the ERMES/MDM complex, which serves as a molecular tether to connect the endoplasmic reticulum (ER) and mitochondria. Components of this complex are involved in the control of mitochondrial shape and protein biogenesis, and function in nonvesicular lipid trafficking between the ER and mitochondria. The mdm12-mmm1 subcomplex functions in the major beta-barrel assembly pathway that is responsible for biogenesis of all outer membrane beta-barrel proteins, and acts in a late step after the SAM complex. The mdm10-mdm12-mmm1 subcomplex further acts in the TOM40-specific pathway after the action of the mdm12-mmm1 complex. Essential for establishing and maintaining the structure of mitochondria and maintenance of mtDNA nucleoids. This Schizosaccharomyces pombe (strain 972 / ATCC 24843) (Fission yeast) protein is Maintenance of mitochondrial morphology protein 1.